Reading from the N-terminus, the 43-residue chain is Protein PsbN (43 aa).

A helical transmembrane segment spans residues 5–27 (TFLSIFISAALLGITGYSIYTAF).

The protein belongs to the PsbN family.

It is found in the plastid. It localises to the cyanelle thylakoid membrane. Functionally, may play a role in photosystem I and II biogenesis. The polypeptide is Protein PsbN (Cyanophora paradoxa).